The chain runs to 161 residues: Protein PLANT CADMIUM RESISTANCE 12 (161 aa).

Residues 71–89 (AGLIHLALGFIGCSWLYAF) form a helical membrane-spanning segment.

This sequence belongs to the cornifelin family.

Its subcellular location is the membrane. May be involved in heavy metals transport. The sequence is that of Protein PLANT CADMIUM RESISTANCE 12 (PCR12) from Arabidopsis thaliana (Mouse-ear cress).